The primary structure comprises 340 residues: Protein RecA (340 aa).

ATP is bound at residue Gly-65–Thr-72.

It belongs to the RecA family.

The protein resides in the cytoplasm. Its function is as follows. Can catalyze the hydrolysis of ATP in the presence of single-stranded DNA, the ATP-dependent uptake of single-stranded DNA by duplex DNA, and the ATP-dependent hybridization of homologous single-stranded DNAs. It interacts with LexA causing its activation and leading to its autocatalytic cleavage. The polypeptide is Protein RecA (Thermus thermophilus).